A 121-amino-acid chain; its full sequence is LOB domain-containing protein 24 (121 aa).

In terms of domain architecture, LOB spans 4 to 105; sequence KRCAACKYLR…NELAKTQAEI (102 aa).

The protein belongs to the LOB domain-containing protein family.

In Arabidopsis thaliana (Mouse-ear cress), this protein is LOB domain-containing protein 24 (LBD24).